The primary structure comprises 367 residues: D-alanine--D-alanine ligase (367 aa).

Residues 148-357 enclose the ATP-grasp domain; sequence KMAFEQAGLP…FPELVDKLVQ (210 aa). Residue 184–239 participates in ATP binding; that stretch reads EASLGYPCFVKPANLGSSVGISKVRSRQELEDALDNAANYDRRIIVEAGVVAREVE. Residues D310, E324, and N326 each contribute to the Mg(2+) site.

This sequence belongs to the D-alanine--D-alanine ligase family. Mg(2+) serves as cofactor. Mn(2+) is required as a cofactor.

It localises to the cytoplasm. The enzyme catalyses 2 D-alanine + ATP = D-alanyl-D-alanine + ADP + phosphate + H(+). It functions in the pathway cell wall biogenesis; peptidoglycan biosynthesis. Cell wall formation. This Trichormus variabilis (strain ATCC 29413 / PCC 7937) (Anabaena variabilis) protein is D-alanine--D-alanine ligase.